Here is a 113-residue protein sequence, read N- to C-terminus: AAPTATVTPSSGLSDGTVVKVAGAGLQAGTAYDVGQCAWVDTGVLACNPADFSSVTADANGSASTSLTVRRSFEGFLFDGTRWGTVDCTTAACQVGLSDAAGNGPEGVAISFN.

2 disulfide bridges follow: Cys37/Cys47 and Cys88/Cys93.

The protein belongs to the neocarzinostatin family.

Its function is as follows. NCS has antibiotic activity (for Gram-positive bacteria) and antitumor activity (for certain mouse tumors). NCS binds non-covalently to a chromophore which is the cytotoxic and mutagenic component of the antibiotic. The chromophore binds to DNA as a weak intercalator and causes single- and double-strand breaks. The chain is Neocarzinostatin (ncsA) from Streptomyces malayensis.